Here is a 284-residue protein sequence, read N- to C-terminus: MYVVSTKQMLNNAQRGGYAVPAFNIHNLETMQVVVETAANLHAPVIIAGTPGTFTHAGTENLLALVSAMAKHYHHPLAIHLDHHTKFDDIAQKVRSGVRSVMIDASHLPFAQNISRVKEVVDFCHRFDVSVEAELGQLGGQEDDVQVNEADAFYTNPAQAREFAEATGIDSLAVAIGTAHGMYASAPALDFSRLENIRQWVNLPLVLHGASGLSTKDIQQTIKLGICKINVATELKNAFSQALKNYLTEHPEATDPRDYLQSAKSAMRDVVSKVIADCGCEGRA.

Aspartate 82 acts as the Proton donor in catalysis. Zn(2+) contacts are provided by histidine 83 and histidine 180. Glycine 181 lines the dihydroxyacetone phosphate pocket. Histidine 208 provides a ligand contact to Zn(2+). Dihydroxyacetone phosphate is bound by residues 209–211 and 230–233; these read GAS and NVAT.

The protein belongs to the class II fructose-bisphosphate aldolase family. TagBP aldolase GatY subfamily. In terms of assembly, forms a complex with GatZ. Requires Zn(2+) as cofactor.

The catalysed reaction is D-tagatofuranose 1,6-bisphosphate = D-glyceraldehyde 3-phosphate + dihydroxyacetone phosphate. It participates in carbohydrate metabolism; D-tagatose 6-phosphate degradation; D-glyceraldehyde 3-phosphate and glycerone phosphate from D-tagatose 6-phosphate: step 2/2. In terms of biological role, catalytic subunit of the tagatose-1,6-bisphosphate aldolase GatYZ, which catalyzes the reversible aldol condensation of dihydroxyacetone phosphate (DHAP or glycerone-phosphate) with glyceraldehyde 3-phosphate (G3P) to produce tagatose 1,6-bisphosphate (TBP). Requires GatZ subunit for full activity and stability. Is involved in the catabolism of galactitol. This Escherichia coli O157:H7 protein is D-tagatose-1,6-bisphosphate aldolase subunit GatY.